The primary structure comprises 889 residues: DNA-directed RNA polymerase subunit Rpo1N (889 aa).

Cysteine 62, cysteine 65, cysteine 72, histidine 75, cysteine 102, cysteine 105, cysteine 149, and cysteine 152 together coordinate Zn(2+). Positions 466, 468, and 470 each coordinate Mg(2+).

It belongs to the RNA polymerase beta' chain family. As to quaternary structure, part of the RNA polymerase complex. Requires Mg(2+) as cofactor. It depends on Zn(2+) as a cofactor.

The protein resides in the cytoplasm. The enzyme catalyses RNA(n) + a ribonucleoside 5'-triphosphate = RNA(n+1) + diphosphate. In terms of biological role, DNA-dependent RNA polymerase (RNAP) catalyzes the transcription of DNA into RNA using the four ribonucleoside triphosphates as substrates. Forms the clamp head domain. This chain is DNA-directed RNA polymerase subunit Rpo1N, found in Methanococcus vannielii (strain ATCC 35089 / DSM 1224 / JCM 13029 / OCM 148 / SB).